The following is a 570-amino-acid chain: Protein HEATR9 (570 aa).

The protein is Protein HEATR9 (HEATR9) of Homo sapiens (Human).